A 252-amino-acid chain; its full sequence is MRIDILSLFPDMFDATLGQSIVGRAQDDGFVDIKVTDFRQYTTDKHRHVDDAPFGGGAGMLLQAQPIFDAMDAIEQETKDTYPKGRVILMDPAGRRFDQDFAMELAQEEHLTFICGHYEGYDERIRQLVTDEASLGDYVLTGGELAAMVMVDATVRFVPGVLGNMSSPMGDSFSNGLLEYPQYTRPADFRGMKVPEVLTSGNHEKIREWRMRESLKRTLERRPDLLKNAKLSREQQIILQDLKLDLDPDAPK.

S-adenosyl-L-methionine contacts are provided by residues Gly-116 and 135 to 140 (LGDYVL).

The protein belongs to the RNA methyltransferase TrmD family. Homodimer.

It is found in the cytoplasm. The enzyme catalyses guanosine(37) in tRNA + S-adenosyl-L-methionine = N(1)-methylguanosine(37) in tRNA + S-adenosyl-L-homocysteine + H(+). In terms of biological role, specifically methylates guanosine-37 in various tRNAs. This is tRNA (guanine-N(1)-)-methyltransferase from Limosilactobacillus fermentum (strain NBRC 3956 / LMG 18251) (Lactobacillus fermentum).